The primary structure comprises 377 residues: T-protein (377 aa).

Positions Met1–Gly92 constitute a Chorismate mutase domain. The Prephenate/arogenate dehydrogenase domain maps to His101 to Ser364.

The protein in the C-terminal section; belongs to the prephenate/arogenate dehydrogenase family.

The protein resides in the cytoplasm. It catalyses the reaction chorismate = prephenate. It carries out the reaction prephenate + NAD(+) = 3-(4-hydroxyphenyl)pyruvate + CO2 + NADH. It participates in amino-acid biosynthesis; L-tyrosine biosynthesis; (4-hydroxyphenyl)pyruvate from prephenate (NAD(+) route): step 1/1. The protein operates within metabolic intermediate biosynthesis; prephenate biosynthesis; prephenate from chorismate: step 1/1. This is T-protein (tyrA) from Haemophilus influenzae (strain ATCC 51907 / DSM 11121 / KW20 / Rd).